The chain runs to 182 residues: Transcription termination/antitermination protein NusG (182 aa).

One can recognise a KOW domain in the interval 131 to 163 (VGEQVRIQSGPFANQIGEVQEIEADKFKLTVLV).

The protein belongs to the NusG family.

Its function is as follows. Participates in transcription elongation, termination and antitermination. This is Transcription termination/antitermination protein NusG from Staphylococcus epidermidis (strain ATCC 35984 / DSM 28319 / BCRC 17069 / CCUG 31568 / BM 3577 / RP62A).